A 251-amino-acid polypeptide reads, in one-letter code: 1-(5-phosphoribosyl)-5-[(5-phosphoribosylamino)methylideneamino] imidazole-4-carboxamide isomerase (251 aa).

Asp8 functions as the Proton acceptor in the catalytic mechanism. Catalysis depends on Asp131, which acts as the Proton donor.

Belongs to the HisA/HisF family.

Its subcellular location is the cytoplasm. It catalyses the reaction 1-(5-phospho-beta-D-ribosyl)-5-[(5-phospho-beta-D-ribosylamino)methylideneamino]imidazole-4-carboxamide = 5-[(5-phospho-1-deoxy-D-ribulos-1-ylimino)methylamino]-1-(5-phospho-beta-D-ribosyl)imidazole-4-carboxamide. It participates in amino-acid biosynthesis; L-histidine biosynthesis; L-histidine from 5-phospho-alpha-D-ribose 1-diphosphate: step 4/9. The polypeptide is 1-(5-phosphoribosyl)-5-[(5-phosphoribosylamino)methylideneamino] imidazole-4-carboxamide isomerase (Burkholderia pseudomallei (strain 1710b)).